Here is a 198-residue protein sequence, read N- to C-terminus: Imidazole glycerol phosphate synthase subunit HisH (198 aa).

The 194-residue stretch at 1-194 folds into the Glutamine amidotransferase type-1 domain; that stretch reads MIAIIDYGLG…LKGGFQDDQT (194 aa). The active-site Nucleophile is the C77. Active-site residues include H169 and E171.

In terms of assembly, heterodimer of HisH and HisF.

It localises to the cytoplasm. It carries out the reaction 5-[(5-phospho-1-deoxy-D-ribulos-1-ylimino)methylamino]-1-(5-phospho-beta-D-ribosyl)imidazole-4-carboxamide + L-glutamine = D-erythro-1-(imidazol-4-yl)glycerol 3-phosphate + 5-amino-1-(5-phospho-beta-D-ribosyl)imidazole-4-carboxamide + L-glutamate + H(+). The enzyme catalyses L-glutamine + H2O = L-glutamate + NH4(+). It participates in amino-acid biosynthesis; L-histidine biosynthesis; L-histidine from 5-phospho-alpha-D-ribose 1-diphosphate: step 5/9. Functionally, IGPS catalyzes the conversion of PRFAR and glutamine to IGP, AICAR and glutamate. The HisH subunit catalyzes the hydrolysis of glutamine to glutamate and ammonia as part of the synthesis of IGP and AICAR. The resulting ammonia molecule is channeled to the active site of HisF. In Staphylococcus saprophyticus subsp. saprophyticus (strain ATCC 15305 / DSM 20229 / NCIMB 8711 / NCTC 7292 / S-41), this protein is Imidazole glycerol phosphate synthase subunit HisH.